A 651-amino-acid polypeptide reads, in one-letter code: DNA mismatch repair protein MutL (651 aa).

It belongs to the DNA mismatch repair MutL/HexB family.

Its function is as follows. This protein is involved in the repair of mismatches in DNA. It is required for dam-dependent methyl-directed DNA mismatch repair. May act as a 'molecular matchmaker', a protein that promotes the formation of a stable complex between two or more DNA-binding proteins in an ATP-dependent manner without itself being part of a final effector complex. This chain is DNA mismatch repair protein MutL, found in Streptococcus mutans serotype c (strain ATCC 700610 / UA159).